Here is a 994-residue protein sequence, read N- to C-terminus: UPF0182 protein Strop_3729 (994 aa).

Helical transmembrane passes span I18–W38, L61–L81, I110–Q130, F174–I194, A209–D229, I260–M280, and L283–I303. Disordered regions lie at residues G891–A934 and F970–G994. A compositionally biased stretch (pro residues) spans P897–L926.

The protein belongs to the UPF0182 family.

Its subcellular location is the cell membrane. The polypeptide is UPF0182 protein Strop_3729 (Salinispora tropica (strain ATCC BAA-916 / DSM 44818 / JCM 13857 / NBRC 105044 / CNB-440)).